A 125-amino-acid polypeptide reads, in one-letter code: Basic leucine zipper transcriptional factor ATF-like (125 aa).

Positions 1-14 (MPHSSDSSDSSFSR) are enriched in low complexity. The disordered stretch occupies residues 1–58 (MPHSSDSSDSSFSRSPPPGKQDSSDDVRKVQRREKNRIAAQKSRQRQTQKADTLHLES). Residues 26–89 (DVRKVQRREK…KYFTSVLSSH (64 aa)) form the bZIP domain. The basic motif stretch occupies residues 28 to 50 (RKVQRREKNRIAAQKSRQRQTQK). Serine 43 bears the Phosphoserine mark. A Phosphothreonine modification is found at threonine 48. The interval 54-75 (LHLESEDLEKQNAALRKEIKQL) is leucine-zipper.

This sequence belongs to the bZIP family. As to quaternary structure, heterodimer; mainly heterodimerizes with JUNB. The BATF-JUNB heterodimer interacts with IRF4 and IRF8. Interacts (via bZIP domain) with IRF4 and IRF8; the interaction is direct. Also forms heterodimers with JUN and JUND. Interacts with IFI35. Phosphorylated on serine and threonine residues and at least one tyrosine residue. Phosphorylation at Ser-43 inhibit DNA binding activity and transforms it as a negative regulator of AP-1 mediated transcription.

Its subcellular location is the nucleus. It localises to the cytoplasm. Functionally, AP-1 family transcription factor that controls the differentiation of lineage-specific cells in the immune system: specifically mediates the differentiation of T-helper 17 cells (Th17), follicular T-helper cells (TfH), CD8(+) dendritic cells and class-switch recombination (CSR) in B-cells. Acts via the formation of a heterodimer with JUNB that recognizes and binds DNA sequence 5'-TGA[CG]TCA-3'. The BATF-JUNB heterodimer also forms a complex with IRF4 (or IRF8) in immune cells, leading to recognition of AICE sequence (5'-TGAnTCA/GAAA-3'), an immune-specific regulatory element, followed by cooperative binding of BATF and IRF4 (or IRF8) and activation of genes. Controls differentiation of T-helper cells producing interleukin-17 (Th17 cells) by binding to Th17-associated gene promoters: regulates expression of the transcription factor RORC itself and RORC target genes such as IL17 (IL17A or IL17B). Also involved in differentiation of follicular T-helper cells (TfH) by directing expression of BCL6 and MAF. In B-cells, involved in class-switch recombination (CSR) by controlling the expression of both AICDA and of germline transcripts of the intervening heavy-chain region and constant heavy-chain region (I(H)-C(H)). Following infection, can participate in CD8(+) dendritic cell differentiation via interaction with IRF4 and IRF8 to mediate cooperative gene activation. Regulates effector CD8(+) T-cell differentiation by regulating expression of SIRT1. Following DNA damage, part of a differentiation checkpoint that limits self-renewal of hematopoietic stem cells (HSCs): up-regulated by STAT3, leading to differentiation of HSCs, thereby restricting self-renewal of HSCs. The polypeptide is Basic leucine zipper transcriptional factor ATF-like (BATF) (Bos taurus (Bovine)).